Consider the following 992-residue polypeptide: MKGLGDSRPRHLSDSLDPPHEPLFAGPDRNPYLLSPTEAFAREARFPGQNTLPGDGLFPLNNQLPPPSSTFPRIHYNSHFEVPEESPFPSHAQATKINRLPANLLDQFEKQLPIHRDGFSTLQFPRGEAKARGESPGRIRHLVHSVQRLFFTKAPSMEGTAGKVGGNGSKKGGLEDGKGRRAKSKERAKAGEPKRRSRSNISGWWSSDDNLDGEGGAFRSGPASGLMTLGRQQERTQPRYFMHAYNTISGHMLKTTKNTTTELTAPPPPPAPPATCPSLGVGTDTNYVKRGSWSTLTLSHAHEVCQKTSATLDKSLLKSKSCHQGLAYHYLQVPGGGGEWSTTLLSPRDMDSTAEGPIPCRRMRSGSYIKAMGDEDSDESGGGSPKPSPKTAARRQSYLRATQQSLGEQSNPRRSLDRLDSVDMLLPSKCPSWEDDYNPISDSLNDSSCISQVFGQASLIPQLFGHDQQVREADLSDQYEAACESACSEAESTTAEALDLPLPSYFRSRSHSYLRAIQAGCSQEEDSVSLQSLSPPPSTGSLSNSRTLPSSSCLVAYKKTPPPVPPRTTSKPFISVTVQSSTESAQDTYLDSQDHKSEVTSQSGLSNSSDSLDSSTRPPSVTRGGITPGPEAPEPPPKHAALKSEQGTLTSSESHSEAIPKRKLSSIGIQVDCIQPVPKEEPSPATKFQSIGIQVEDDWRSSAPSHSMSSRRDTDSDTQDANDSSCKSSERSLPDCTSHPNSISIDAGPRQAPKIAQIKRNLSYGDNSDPALEASSLPPPDPWLETSSSSPAEPAQPGACRRDGYWFLKLLQAETERLEGWCCQMDKETKENNLSEEVLGKVLSAVGSAQLLMSQKFQQFRGLCEQNLNPDANPRPTAQDLAGFWDLLQLSIEDISMKFDELYHLKANSWQLVETPEKRKEEKKPPPPVPKKPAKSKAAVSRDKASDAGDKQRQEARKRLLAAKRAASVRQNSATESADSIEIYVPEAQTRL.

Over residues 1 to 20 the composition is skewed to basic and acidic residues; that stretch reads MKGLGDSRPRHLSDSLDPPH. Disordered stretches follow at residues 1-31 and 157-225; these read MKGL…DRNP and MEGT…PASG. Over residues 162 to 171 the composition is skewed to gly residues; it reads GKVGGNGSKK. A compositionally biased stretch (basic and acidic residues) spans 172-194; sequence GGLEDGKGRRAKSKERAKAGEPK. Residues 199–208 show a composition bias toward polar residues; that stretch reads SNISGWWSSD. Serine 206 and serine 207 each carry phosphoserine. Arginine 290 carries the omega-N-methylarginine modification. The tract at residues 342 to 396 is disordered; that stretch reads TTLLSPRDMDSTAEGPIPCRRMRSGSYIKAMGDEDSDESGGGSPKPSPKTAARRQ. A phosphoserine mark is found at serine 377, serine 380, serine 384, serine 388, serine 405, serine 415, and serine 421. 3 disordered regions span residues 527–751, 763–798, and 915–992; these read SVSL…GPRQ, SYGD…AQPG, and TPEK…QTRL. The segment covering 528-554 has biased composition (low complexity); it reads VSLQSLSPPPSTGSLSNSRTLPSSSCL. Polar residues predominate over residues 576 to 591; it reads VTVQSSTESAQDTYLD. Phosphoserine occurs at positions 580, 581, 609, 611, 665, and 744. The span at 600–620 shows a compositional bias: low complexity; it reads TSQSGLSNSSDSLDSSTRPPS. Residue threonine 915 is modified to Phosphothreonine. Basic and acidic residues-rich tracts occupy residues 915–925 and 940–958; these read TPEKRKEEKKP and VSRD…EARK. Residues 969–978 are compositionally biased toward polar residues; that stretch reads VRQNSATESA. Serine 973 is subject to Phosphoserine.

This sequence belongs to the SAPAP family. In terms of assembly, interacts with DLG1 and DLG4/PSD-95.

The protein resides in the membrane. Its function is as follows. May play a role in the molecular organization of synapses and neuronal cell signaling. Could be an adapter protein linking ion channel to the subsynaptic cytoskeleton. May induce enrichment of PSD-95/SAP90 at the plasma membrane. In Mus musculus (Mouse), this protein is Disks large-associated protein 4 (Dlgap4).